A 361-amino-acid chain; its full sequence is dTDP-glucose 4,6-dehydratase (361 aa).

Residues 11 to 12, 32 to 35, 58 to 59, 80 to 84, and T99 each bind NAD(+); these read FI, DKLT, DI, and LAAES. S84 lines the substrate pocket. T133 contacts substrate. Residue D134 is the Proton donor of the active site. Catalysis depends on proton acceptor residues E135 and Y167. NAD(+) is bound at residue 167-171; that stretch reads YSASK. A substrate-binding site is contributed by N196. An NAD(+)-binding site is contributed by N197. Substrate is bound by residues 206–207, 222–224, R231, N266, 296–300, and Y357; these read KL, PIY, and DRPGH.

Belongs to the NAD(P)-dependent epimerase/dehydratase family. dTDP-glucose dehydratase subfamily. Homodimer. Requires NAD(+) as cofactor.

The catalysed reaction is dTDP-alpha-D-glucose = dTDP-4-dehydro-6-deoxy-alpha-D-glucose + H2O. Its pathway is carbohydrate biosynthesis; dTDP-L-rhamnose biosynthesis. The protein operates within bacterial outer membrane biogenesis; LPS O-antigen biosynthesis. Functionally, catalyzes the dehydration of dTDP-D-glucose to form dTDP-6-deoxy-D-xylo-4-hexulose via a three-step process involving oxidation, dehydration and reduction. The protein is dTDP-glucose 4,6-dehydratase of Salmonella typhimurium (strain LT2 / SGSC1412 / ATCC 700720).